A 414-amino-acid chain; its full sequence is EARP and GARP complex-interacting protein 1 (414 aa).

Methionine 1 bears the N-acetylmethionine mark. WD repeat units follow at residues 159–199 (TAHG…SQAV), 209–249 (KGQL…QIYC), 253–293 (AHGQ…EPVK), and 297–337 (EHSH…SEPF). The disordered stretch occupies residues 337–362 (FGHLVDDDDISDQEDHRSEEKSKEPL). Phosphoserine is present on serine 347. Over residues 349 to 362 (QEDHRSEEKSKEPL) the composition is skewed to basic and acidic residues. The WD 5 repeat unit spans residues 372 to 412 (EHEDSVYAVDWSSADPWLFASLSYDGRLVINRVPRALKYHI).

Belongs to the WD repeat EIPR1 family. Interacts with two multisubunit tethering complexes: EARP composed of VPS50, VPS51, VPS52 and VPS53 subunits and GARP complex composed of VPS51, VPS52, VPS53 and VPS54 subunits. Interacts with SNAP29.

The protein resides in the golgi apparatus. Its subcellular location is the trans-Golgi network. In terms of biological role, acts as a component of endosomal retrieval machinery that is involved in protein transport from early endosomes to either recycling endosomes or the trans-Golgi network. Mediates the recruitment of Golgi-associated retrograde protein (GARP) complex to the trans-Golgi network and controls early endosome-to-Golgi transport of internalized protein. Promotes the recycling of internalized transferrin receptor (TFRC) to the plasma membrane through interaction with endosome-associated recycling protein (EARP) complex. Controls proper insulin distribution and secretion, and retention of cargo in mature dense core vesicles. Required for the stability of the endosome-associated retrograde protein (EARP) complex subunits and for proper localization and association of EARP with membranes. The chain is EARP and GARP complex-interacting protein 1 from Pongo abelii (Sumatran orangutan).